Reading from the N-terminus, the 148-residue chain is MKVIFLKDVKGKGKKGEIKNVPDGYANNFLLKQGLAAEATNSSMKTLDAQKRKEEKDAAAEVENAKELKETLEKLTVEVKAKSGEGGRLFGSITSKQIVDVMQKSHKIKLDKRKFEMDDAIRALGYTNVNVKLHPQVTATVKVHVSEQ.

The protein belongs to the bacterial ribosomal protein bL9 family.

Functionally, binds to the 23S rRNA. The sequence is that of Large ribosomal subunit protein bL9 from Bacillus mycoides (strain KBAB4) (Bacillus weihenstephanensis).